A 353-amino-acid polypeptide reads, in one-letter code: tRNA N6-adenosine threonylcarbamoyltransferase (353 aa).

Fe cation is bound by residues His-115 and His-119. Substrate is bound by residues 138-142 (LVSGG), Asp-171, Gly-184, and Asn-276. Asp-304 is a Fe cation binding site.

This sequence belongs to the KAE1 / TsaD family. Fe(2+) serves as cofactor.

Its subcellular location is the cytoplasm. The enzyme catalyses L-threonylcarbamoyladenylate + adenosine(37) in tRNA = N(6)-L-threonylcarbamoyladenosine(37) in tRNA + AMP + H(+). Its function is as follows. Required for the formation of a threonylcarbamoyl group on adenosine at position 37 (t(6)A37) in tRNAs that read codons beginning with adenine. Is involved in the transfer of the threonylcarbamoyl moiety of threonylcarbamoyl-AMP (TC-AMP) to the N6 group of A37, together with TsaE and TsaB. TsaD likely plays a direct catalytic role in this reaction. The chain is tRNA N6-adenosine threonylcarbamoyltransferase from Xanthomonas euvesicatoria pv. vesicatoria (strain 85-10) (Xanthomonas campestris pv. vesicatoria).